We begin with the raw amino-acid sequence, 348 residues long: Glycerol-1-phosphate dehydrogenase [NAD(P)+] (348 aa).

NAD(+) is bound by residues 94 to 98 (GKVID) and 116 to 119 (TTAS). D121 is a binding site for substrate. S125 lines the NAD(+) pocket. Substrate is bound at residue D168. The Zn(2+) site is built by D168 and H248. H252 contributes to the substrate binding site. Zn(2+) is bound at residue H264.

Belongs to the glycerol-1-phosphate dehydrogenase family. Homooctamer. Zn(2+) serves as cofactor.

The protein resides in the cytoplasm. It carries out the reaction sn-glycerol 1-phosphate + NAD(+) = dihydroxyacetone phosphate + NADH + H(+). The enzyme catalyses sn-glycerol 1-phosphate + NADP(+) = dihydroxyacetone phosphate + NADPH + H(+). Its pathway is membrane lipid metabolism; glycerophospholipid metabolism. In terms of biological role, catalyzes the NAD(P)H-dependent reduction of dihydroxyacetonephosphate (DHAP or glycerone phosphate) to glycerol 1-phosphate (G1P). The G1P thus generated is used as the glycerophosphate backbone of phospholipids in the cellular membranes of Archaea. This is Glycerol-1-phosphate dehydrogenase [NAD(P)+] from Methanobrevibacter smithii (strain ATCC 35061 / DSM 861 / OCM 144 / PS).